Here is an 82-residue protein sequence, read N- to C-terminus: Large ribosomal subunit protein uL23 (82 aa).

Belongs to the universal ribosomal protein uL23 family. As to quaternary structure, part of the 50S ribosomal subunit. Contacts protein L29.

Functionally, binds to 23S rRNA. One of the proteins that surrounds the polypeptide exit tunnel on the outside of the ribosome. This Methanosarcina acetivorans (strain ATCC 35395 / DSM 2834 / JCM 12185 / C2A) protein is Large ribosomal subunit protein uL23.